A 171-amino-acid chain; its full sequence is Phosphopantetheine adenylyltransferase (171 aa).

Threonine 10 contributes to the substrate binding site. Residues 10–11 (TF) and histidine 18 each bind ATP. Positions 42, 74, and 88 each coordinate substrate. ATP contacts are provided by residues 89 to 91 (GLR), glutamate 99, and 124 to 130 (WACLSSK).

The protein belongs to the bacterial CoaD family. Homohexamer. It depends on Mg(2+) as a cofactor.

The protein localises to the cytoplasm. It carries out the reaction (R)-4'-phosphopantetheine + ATP + H(+) = 3'-dephospho-CoA + diphosphate. Its pathway is cofactor biosynthesis; coenzyme A biosynthesis; CoA from (R)-pantothenate: step 4/5. Functionally, reversibly transfers an adenylyl group from ATP to 4'-phosphopantetheine, yielding dephospho-CoA (dPCoA) and pyrophosphate. This chain is Phosphopantetheine adenylyltransferase, found in Blochmanniella pennsylvanica (strain BPEN).